We begin with the raw amino-acid sequence, 274 residues long: MAIHLYKTSTPSTRNGTVDSQVKSNPRNNLIYGQHRCGKGRNARGIITAGHRGGGHKRLYRKIDFRRTEKDIYGRIVTIEYDPNRNAYICLIHYGDGEKRYILHPRGALIGDTIVSGTEVPIKMGNALPLTDMPLGTAIHNIEITLGKGGQLARAAGAVAKLIAKEGKSATLKLPSGEVRLISKNCSATVGQVGNVGVNQKSLGRAGSKRWLGKRPVVRGVVMNPVDHPHGGGEGRAPIGRKKPTTPWGYPALGRRSRKRNKYSDNLILRRRSK.

2 disordered regions span residues 1–25 (MAIH…VKSN) and 224–274 (NPVD…RRSK). Positions 7 to 25 (KTSTPSTRNGTVDSQVKSN) are enriched in polar residues.

It belongs to the universal ribosomal protein uL2 family. As to quaternary structure, part of the 50S ribosomal subunit.

The protein localises to the plastid. It localises to the chloroplast. This Coffea arabica (Arabian coffee) protein is Large ribosomal subunit protein uL2cz (rpl2-A).